Consider the following 241-residue polypeptide: Uridylate kinase (241 aa).

15–18 (KLSG) provides a ligand contact to ATP. Residues 23-28 (GTEGFG) form an involved in allosteric activation by GTP region. Gly57 provides a ligand contact to UMP. ATP contacts are provided by Gly58 and Arg62. Residues Asp77 and 138–145 (TGNPFFTT) contribute to the UMP site. Residues Thr165, Phe171, and Asp174 each coordinate ATP.

This sequence belongs to the UMP kinase family. Homohexamer.

It is found in the cytoplasm. The catalysed reaction is UMP + ATP = UDP + ADP. It participates in pyrimidine metabolism; CTP biosynthesis via de novo pathway; UDP from UMP (UMPK route): step 1/1. With respect to regulation, allosterically activated by GTP. Inhibited by UTP. Catalyzes the reversible phosphorylation of UMP to UDP. The polypeptide is Uridylate kinase (Shigella dysenteriae serotype 1 (strain Sd197)).